The chain runs to 179 residues: GTP-dependent dephospho-CoA kinase (179 aa).

GTP-binding residues include Asp-55, Val-57, Asp-74, Lys-76, and Glu-128.

The protein belongs to the GTP-dependent DPCK family.

It catalyses the reaction 3'-dephospho-CoA + GTP = GDP + CoA + H(+). It participates in cofactor biosynthesis; coenzyme A biosynthesis. In terms of biological role, catalyzes the GTP-dependent phosphorylation of the 3'-hydroxyl group of dephosphocoenzyme A to form coenzyme A (CoA). This is GTP-dependent dephospho-CoA kinase from Saccharolobus solfataricus (strain ATCC 35092 / DSM 1617 / JCM 11322 / P2) (Sulfolobus solfataricus).